Reading from the N-terminus, the 526-residue chain is D-arabinono-1,4-lactone oxidase (526 aa).

Residues 19 to 193 form the FAD-binding PCMH-type domain; sequence YSAKPERYFQ…VSATIRVVPG (175 aa). His56 is subject to Pros-8alpha-FAD histidine.

Belongs to the oxygen-dependent FAD-linked oxidoreductase family. In terms of assembly, monomer. FAD is required as a cofactor. Post-translationally, the N-terminus is blocked.

Its subcellular location is the mitochondrion membrane. It catalyses the reaction D-arabinono-1,4-lactone + O2 = dehydro-D-arabinono-1,4-lactone + H2O2 + H(+). The protein operates within cofactor biosynthesis; D-erythroascorbate biosynthesis; dehydro-D-arabinono-1,4-lactone from D-arabinose: step 2/2. Its function is as follows. Can oxidize L-gulono-1,4-lactone as well as D-arabinono-1,4-lactone and L-galactono-1,4-lactone. This is D-arabinono-1,4-lactone oxidase (ALO1) from Saccharomyces cerevisiae (strain ATCC 204508 / S288c) (Baker's yeast).